Reading from the N-terminus, the 440-residue chain is COP9 signalosome complex subunit 4 (440 aa).

A PCI domain is found at 216–386 (SNRQFLAASQ…RIIYFESGLE (171 aa)).

The protein belongs to the CSN4 family. As to quaternary structure, component of the COP9 signalosome (CSN) complex.

The protein resides in the cytoplasm. The protein localises to the nucleus. Its function is as follows. Component of the COP9 signalosome (CSN) complex that acts as an regulator of the ubiquitin (Ubl) conjugation pathway by mediating the deneddylation of the cullin subunit of SCF-type E3 ubiquitin-protein ligase complexes. The CSN complex is involved in the regulation of the circadian clock through its control of the stability of the SCF(FWD1) complex. The protein is COP9 signalosome complex subunit 4 (csn-4) of Neurospora crassa (strain ATCC 24698 / 74-OR23-1A / CBS 708.71 / DSM 1257 / FGSC 987).